The sequence spans 701 residues: Phytyl ester synthase 2, chloroplastic (701 aa).

The N-terminal 65 residues, 1–65 (MAVTVLPSVS…KNNDENRATV (65 aa)), are a transit peptide targeting the chloroplast. The interval 37–64 (SVTSTSSPPTPSSGVQRRRKNNDENRAT) is disordered.

This sequence belongs to the diacylglycerol acyltransferase family.

It is found in the plastid. The protein localises to the chloroplast. The protein resides in the plastoglobule. The catalysed reaction is a 1,2-diacyl-3-O-(beta-D-galactosyl)-sn-glycerol + a 1,2-diacylglycerol = an acyl-3-O-(beta-D-galactosyl)-sn-glycerol + a triacylglycerol. The enzyme catalyses a 1,2-diacylglycerol + a fatty acyl-CoA = a triacylglycerol + CoA. It catalyses the reaction a fatty acyl-[ACP] + a 1,2-diacylglycerol = a triacylglycerol + holo-[ACP]. It carries out the reaction phytol + a fatty acyl-CoA = a fatty acid phytyl ester + CoA. The catalysed reaction is phytol + tetradecanoyl-CoA = tetradecanoate phytyl ester + CoA. The enzyme catalyses a 1,3-diacylglycerol + a fatty acyl-CoA = a triacylglycerol + CoA. It catalyses the reaction 1,2-dihexanoylglycerol + tetradecanoyl-CoA = 1,2-dihexanoyl-3-tetradecanoylglycerol + CoA. It carries out the reaction 1,2-dihexanoylglycerol + hexadecanoyl-CoA = 1,2-dihexanoyl-3-hexadecanoylglycerol + CoA. The catalysed reaction is 1,2-dihexanoylglycerol + octadecanoyl-CoA = 1,2-dihexanoyl-3-octadecanoylglycerol + CoA. The enzyme catalyses (7Z,10Z,13Z)-hexadecatrienoyl-CoA + 1,2-dihexanoylglycerol = 1,2-dihexanoyl-3-(7Z,10Z,13Z-hexadecatrienoyl)-glycerol + CoA. It catalyses the reaction 1,2-dihexanoylglycerol + (9Z)-octadecenoyl-CoA = 1,2-dihexanoyl-3-(9Z-octadecenoyl)-glycerol + CoA. It carries out the reaction 1,2-dihexanoylglycerol + (9Z,12Z,15Z)-octadecatrienoyl-CoA = 1,2-dihexanoyl-3-(9Z,12Z,15Z-octadecatrienoyl)-glycerol + CoA. The catalysed reaction is phytol + decanoyl-CoA = decanoate phytyl ester + CoA. The enzyme catalyses (7Z,10Z,13Z)-hexadecatrienoyl-CoA + phytol = (7Z,10Z,13Z)-hexadecatrienoate phytyl ester + CoA. It catalyses the reaction phytol + dodecanoyl-CoA = dodecanoate phytyl ester + CoA. Its function is as follows. Acyltransferase involved in fatty acid phytyl ester synthesis in chloroplasts, a process required for the maintenance of the photosynthetic membrane integrity during abiotic stress and senescence. Exhibits phytyl ester synthesis and diacylglycerol acyltransferase activities with broad substrate specificities, and can employ acyl-CoAs, acyl carrier proteins, and galactolipids as acyl donors. The protein is Phytyl ester synthase 2, chloroplastic of Arabidopsis thaliana (Mouse-ear cress).